Reading from the N-terminus, the 356-residue chain is S-adenosylmethionine:tRNA ribosyltransferase-isomerase (356 aa).

It belongs to the QueA family. As to quaternary structure, monomer.

Its subcellular location is the cytoplasm. The catalysed reaction is 7-aminomethyl-7-carbaguanosine(34) in tRNA + S-adenosyl-L-methionine = epoxyqueuosine(34) in tRNA + adenine + L-methionine + 2 H(+). Its pathway is tRNA modification; tRNA-queuosine biosynthesis. In terms of biological role, transfers and isomerizes the ribose moiety from AdoMet to the 7-aminomethyl group of 7-deazaguanine (preQ1-tRNA) to give epoxyqueuosine (oQ-tRNA). In Serratia proteamaculans (strain 568), this protein is S-adenosylmethionine:tRNA ribosyltransferase-isomerase.